Reading from the N-terminus, the 208-residue chain is Large ribosomal subunit protein uL3 (208 aa).

The disordered stretch occupies residues F117–V147.

This sequence belongs to the universal ribosomal protein uL3 family. As to quaternary structure, part of the 50S ribosomal subunit. Forms a cluster with proteins L14 and L19.

Its function is as follows. One of the primary rRNA binding proteins, it binds directly near the 3'-end of the 23S rRNA, where it nucleates assembly of the 50S subunit. The protein is Large ribosomal subunit protein uL3 of Streptococcus equi subsp. zooepidemicus (strain H70).